Reading from the N-terminus, the 465-residue chain is NADH-quinone oxidoreductase subunit N (465 aa).

13 consecutive transmembrane segments (helical) span residues 9–29, 44–64, 73–93, 110–130, 159–179, 198–218, 235–255, 265–285, 292–312, 327–347, 371–391, 405–427, and 444–464; these read FNFV…VLLL, ASII…GFVL, LFVS…FSML, FLFM…IVIF, YFTL…FVYL, PILL…LSIA, FIAF…LRIF, EYIV…VALI, MLAY…VSSM, IFAL…IFLI, IMLA…IFWG, YALV…KILI, and VKQK…VFLL.

It belongs to the complex I subunit 2 family. As to quaternary structure, NDH-1 is composed of 14 different subunits. Subunits NuoA, H, J, K, L, M, N constitute the membrane sector of the complex.

It is found in the cell inner membrane. The enzyme catalyses a quinone + NADH + 5 H(+)(in) = a quinol + NAD(+) + 4 H(+)(out). NDH-1 shuttles electrons from NADH, via FMN and iron-sulfur (Fe-S) centers, to quinones in the respiratory chain. The immediate electron acceptor for the enzyme in this species is believed to be ubiquinone. Couples the redox reaction to proton translocation (for every two electrons transferred, four hydrogen ions are translocated across the cytoplasmic membrane), and thus conserves the redox energy in a proton gradient. This is NADH-quinone oxidoreductase subunit N from Campylobacter lari (strain RM2100 / D67 / ATCC BAA-1060).